Reading from the N-terminus, the 523-residue chain is Succinate-semialdehyde dehydrogenase, mitochondrial (523 aa).

The transit peptide at 1–35 (MATCFLLRNFCAARPALRPPGRLLREPAGAQRRSY) directs the protein to the mitochondrion. Lys-114 is subject to N6-acetyllysine; alternate. An N6-succinyllysine; alternate modification is found at Lys-114. An N6-succinyllysine mark is found at Lys-123 and Lys-172. Residues Arg-201 and 216 to 219 (KPAE) contribute to the NAD(+) site. A substrate-binding site is contributed by Arg-201. The residue at position 253 (Lys-253) is an N6-acetyllysine; alternate. Residue Lys-253 is modified to N6-succinyllysine; alternate. Residue 272–277 (GSTATG) participates in NAD(+) binding. Glu-294 (proton acceptor) is an active-site residue. Substrate is bound at residue Arg-322. Cys-328 functions as the Nucleophile in the catalytic mechanism. A disulfide bridge connects residues Cys-328 and Cys-330. Position 353 is an N6-acetyllysine (Lys-353). Lys-390 carries the post-translational modification N6-succinyllysine. Residue Lys-399 is modified to N6-acetyllysine. Substrate is bound at residue Ser-486. The residue at position 487 (Ser-487) is a Phosphoserine.

The protein belongs to the aldehyde dehydrogenase family. In terms of assembly, homotetramer. In terms of tissue distribution, brain, pancreas, heart, liver, skeletal muscle, kidney. Lower in spleen, lung, kidney and testis.

It is found in the mitochondrion. It catalyses the reaction succinate semialdehyde + NAD(+) + H2O = succinate + NADH + 2 H(+). It participates in amino-acid degradation; 4-aminobutanoate degradation. Its activity is regulated as follows. Redox-regulated. Inhibited under oxydizing conditions. In terms of biological role, catalyzes one step in the degradation of the inhibitory neurotransmitter gamma-aminobutyric acid (GABA). This chain is Succinate-semialdehyde dehydrogenase, mitochondrial (Aldh5a1), found in Rattus norvegicus (Rat).